A 56-amino-acid polypeptide reads, in one-letter code: Per os infectivity factor AC110 (56 aa).

Its function is as follows. Plays an essential role in the process of oral infection. May participate in the crossing of occlusion-derived virions through the host peritrophic membrane during oral infection. The protein is Per os infectivity factor AC110 of Autographa californica nuclear polyhedrosis virus (AcMNPV).